The sequence spans 145 residues: uncharacterized protein (145 aa).

An N-terminal signal peptide occupies residues 1–26 (MAILLPLKSILPWCCITFSFLLSSSG).

This is an uncharacterized protein from Saccharomyces cerevisiae (strain ATCC 204508 / S288c) (Baker's yeast).